Here is a 162-residue protein sequence, read N- to C-terminus: 2-C-methyl-D-erythritol 2,4-cyclodiphosphate synthase (162 aa).

A divalent metal cation is bound by residues Asp10 and His12. Residues 10–12 (DVH) and 36–37 (HS) each bind 4-CDP-2-C-methyl-D-erythritol 2-phosphate. His44 serves as a coordination point for a divalent metal cation. Residues 58-60 (DIG), 63-67 (FSDTD), and Arg144 contribute to the 4-CDP-2-C-methyl-D-erythritol 2-phosphate site.

It belongs to the IspF family. As to quaternary structure, homotrimer. A divalent metal cation is required as a cofactor.

The enzyme catalyses 4-CDP-2-C-methyl-D-erythritol 2-phosphate = 2-C-methyl-D-erythritol 2,4-cyclic diphosphate + CMP. It functions in the pathway isoprenoid biosynthesis; isopentenyl diphosphate biosynthesis via DXP pathway; isopentenyl diphosphate from 1-deoxy-D-xylulose 5-phosphate: step 4/6. In terms of biological role, involved in the biosynthesis of isopentenyl diphosphate (IPP) and dimethylallyl diphosphate (DMAPP), two major building blocks of isoprenoid compounds. Catalyzes the conversion of 4-diphosphocytidyl-2-C-methyl-D-erythritol 2-phosphate (CDP-ME2P) to 2-C-methyl-D-erythritol 2,4-cyclodiphosphate (ME-CPP) with a corresponding release of cytidine 5-monophosphate (CMP). The polypeptide is 2-C-methyl-D-erythritol 2,4-cyclodiphosphate synthase (Burkholderia mallei (strain NCTC 10247)).